The primary structure comprises 397 residues: Citrate synthase (397 aa).

Catalysis depends on residues His266 and Asp320.

This sequence belongs to the citrate synthase family.

The enzyme catalyses oxaloacetate + acetyl-CoA + H2O = citrate + CoA + H(+). Its pathway is carbohydrate metabolism; tricarboxylic acid cycle; isocitrate from oxaloacetate: step 1/2. In Synechocystis sp. (strain ATCC 27184 / PCC 6803 / Kazusa), this protein is Citrate synthase (gltA).